The sequence spans 163 residues: Methyl-CpG-binding domain-containing protein 3 (163 aa).

A CW-type zinc finger spans residues 6–56 (TTLIDSYAAQCWKCLKVRSIESQEDYEEIRSKTLEKFFECKRCEEPGDMVM). The MBD domain maps to 65–137 (WFQDEHSIPK…EEVSFAAPKR (73 aa)). The segment at 140 to 163 (LKKKPVDSHSSSRNTEEDGVSRDA) is disordered. Residues 153 to 163 (NTEEDGVSRDA) are compositionally biased toward basic and acidic residues.

Its subcellular location is the nucleus. Functionally, probable transcriptional regulator. This Arabidopsis thaliana (Mouse-ear cress) protein is Methyl-CpG-binding domain-containing protein 3 (MBD3).